The primary structure comprises 569 residues: Urease subunit alpha (569 aa).

The 439-residue stretch at 131–569 (GGIDTHIHFI…LPLAQRYLLL (439 aa)) folds into the Urease domain. Histidine 136, histidine 138, and lysine 219 together coordinate Ni(2+). At lysine 219 the chain carries N6-carboxylysine. Histidine 221 contributes to the substrate binding site. Histidine 248 and histidine 274 together coordinate Ni(2+). Catalysis depends on histidine 322, which acts as the Proton donor. Residue aspartate 362 coordinates Ni(2+).

The protein belongs to the metallo-dependent hydrolases superfamily. Urease alpha subunit family. In terms of assembly, heterotrimer of UreA (gamma), UreB (beta) and UreC (alpha) subunits. Three heterotrimers associate to form the active enzyme. Requires Ni cation as cofactor. Carboxylation allows a single lysine to coordinate two nickel ions.

The protein localises to the cytoplasm. It catalyses the reaction urea + 2 H2O + H(+) = hydrogencarbonate + 2 NH4(+). Its pathway is nitrogen metabolism; urea degradation; CO(2) and NH(3) from urea (urease route): step 1/1. This chain is Urease subunit alpha, found in Synechococcus sp. (strain WH7805).